The following is a 201-amino-acid chain: Ribonuclease HII (201 aa).

The 187-residue stretch at 15–201 (QRVAGVDEVG…FRPVRRFLEA (187 aa)) folds into the RNase H type-2 domain. Asp-21, Glu-22, and Asp-113 together coordinate a divalent metal cation.

This sequence belongs to the RNase HII family. Mn(2+) serves as cofactor. The cofactor is Mg(2+).

The protein resides in the cytoplasm. It carries out the reaction Endonucleolytic cleavage to 5'-phosphomonoester.. Its function is as follows. Endonuclease that specifically degrades the RNA of RNA-DNA hybrids. This is Ribonuclease HII from Nitrosococcus oceani (strain ATCC 19707 / BCRC 17464 / JCM 30415 / NCIMB 11848 / C-107).